Reading from the N-terminus, the 355-residue chain is Glucose-1-phosphate thymidylyltransferase (355 aa).

Positions 107 and 220 each coordinate Mg(2+).

The protein belongs to the glucose-1-phosphate thymidylyltransferase family. Mg(2+) serves as cofactor.

The catalysed reaction is dTTP + alpha-D-glucose 1-phosphate + H(+) = dTDP-alpha-D-glucose + diphosphate. Its pathway is antibiotic biosynthesis; streptomycin biosynthesis. Involved in the biosynthesis of the streptose moiety of streptomycin. Catalyzes the formation of dTDP-glucose, from dTTP and glucose 1-phosphate, as well as its pyrophosphorolysis. In Streptomyces griseus, this protein is Glucose-1-phosphate thymidylyltransferase (strD).